A 751-amino-acid polypeptide reads, in one-letter code: MSQVNTSQGPVAQGRQRRLSSLSEFNDPFSNAEVYYGPPTDPRKQKQAKPAKINRTRTMSVFDNVSPFKKTGFGKLQQTRRGSEDDTYSSSQGNRRFFIEDVDKTLNELLAAEDTDKNYQITIEDTGPKVLKVGTANSYGYKHINIRGTYMLSNLLQELTIAKSFGRHQIFLDEARINENPVNRLSRLINTQFWNSLTRRVDLNNVGEIAKDTKIDTPGAKNPRIYVPYDCPEQYEFYVQASQMHPSLKLEVEYLPKKITAEYVKSVNDTPGLLALAMEEHFNPSTGEKTLIGYPYAVPGGRFNELYGWDSYMMALGLLEANKTDVARGMVEHFIFEINHYGKILNANRSYYLCRSQPPFLTEMALVVFKKLGGRSNPDAVDLLKRAFQASIKEYKTVWTASPRLDPETGLSRYHPNGLGIPPETESDHFDTVLLPYASKHGVTLDEFKQLYNDGKIKEPKLDEFFLHDRGVRESGHDTTYRFEGVCAYLATIDLNSLLYKYEIDIADFIKEFCDDKYEDPLDHSITTSAMWKEMAKIRQEKITKYMWDDESGFFFDYNTKIKHRTSYESATTFWALWAGLATKEQAQKMVEKALPKLEMLGGLAACTERSRGPISISRPIRQWDYPFGWAPHQILAWEGLRSYGYLTVTNRLAYRWLFMMTKAFVDYNGIVVEKYDVTRGTDPHRVEAEYGNQGADFKGAATEGFGWVNASYILGLKYMNSHARRALGACIPPISFFSSLRPQERNLYGL.

Residues 1 to 10 (MSQVNTSQGP) show a composition bias toward polar residues. The disordered stretch occupies residues 1 to 59 (MSQVNTSQGPVAQGRQRRLSSLSEFNDPFSNAEVYYGPPTDPRKQKQAKPAKINRTRTM). At serine 2 the chain carries N-acetylserine. Phosphoserine; by PKA occurs at positions 20 and 21. Serine 23 carries the post-translational modification Phosphoserine. Basic residues predominate over residues 45–55 (QKQAKPAKINR). Threonine 58 bears the Phosphothreonine mark. Serine 60 bears the Phosphoserine; by PKA mark. A Phosphoserine modification is found at serine 66. A disordered region spans residues 73 to 92 (FGKLQQTRRGSEDDTYSSSQ). A Phosphoserine; by PKA modification is found at serine 83. Positions 114, 116, 118, 120, and 125 each coordinate Ca(2+). Substrate is bound by residues arginine 302, 309 to 310 (WD), asparagine 346, 355 to 357 (RSQ), glutamate 424, arginine 473, and glycine 476. Residues aspartate 478 and glutamate 674 each act as proton donor/acceptor in the active site.

The protein belongs to the glycosyl hydrolase 37 family. In terms of assembly, monomer. Interacts with BMH1 dimers; the interaction is direct and activates NTH1. Interacts with BMH2. Ca(2+) is required as a cofactor. In terms of processing, phosphorylated by protein kinase A (PKA); phosphorylation at Ser-60 and Ser-83 is required for activation by the 14-3-3 proteins BMH1 and BMH2.

The protein resides in the cytoplasm. The enzyme catalyses alpha,alpha-trehalose + H2O = alpha-D-glucose + beta-D-glucose. The protein operates within carbohydrate degradation. With respect to regulation, activated by calcium. Activated by protein kinase A (PKA)-mediated phosphorylation. In terms of biological role, hydrolyzes intracellular trehalose to glucose. The disaccharide trehalose serves as a storage carbohydrate that is mobilized during nutrient stress. Regulates the level of trehalose as a protectant for cell integrity during heat stress. The sequence is that of Cytosolic neutral trehalase from Saccharomyces cerevisiae (strain ATCC 204508 / S288c) (Baker's yeast).